A 130-amino-acid chain; its full sequence is Small ribosomal subunit protein uS11 (130 aa).

This sequence belongs to the universal ribosomal protein uS11 family. Part of the 30S ribosomal subunit. Interacts with proteins S7 and S18. Binds to IF-3.

Functionally, located on the platform of the 30S subunit, it bridges several disparate RNA helices of the 16S rRNA. Forms part of the Shine-Dalgarno cleft in the 70S ribosome. The protein is Small ribosomal subunit protein uS11 of Gloeothece citriformis (strain PCC 7424) (Cyanothece sp. (strain PCC 7424)).